Here is a 276-residue protein sequence, read N- to C-terminus: CDP-diacylglycerol--serine O-phosphatidyltransferase (276 aa).

Residues 1–21 (MVESDEDFAPQEFPHTDTDVI) form a disordered region. Phosphoserine occurs at positions 4, 34, 42, 46, 47, and 50. 4 helical membrane-spanning segments follow: residues 82–102 (MADY…VSCL), 163–183 (IAFA…FFVL), 210–230 (YFEG…AYCV), and 248–268 (QILE…GMIS).

The protein belongs to the CDP-alcohol phosphatidyltransferase class-I family. It depends on Mn(2+) as a cofactor. The cofactor is Mg(2+).

It is found in the microsome membrane. The protein resides in the endoplasmic reticulum membrane. The protein localises to the mitochondrion outer membrane. It carries out the reaction a CDP-1,2-diacyl-sn-glycerol + L-serine = a 1,2-diacyl-sn-glycero-3-phospho-L-serine + CMP + H(+). It participates in phospholipid metabolism; phosphatidylethanolamine biosynthesis; phosphatidylethanolamine from CDP-diacylglycerol: step 1/2. Its function is as follows. Catalyzes the synthesis of phosphatidylserine (PtdSer). The polypeptide is CDP-diacylglycerol--serine O-phosphatidyltransferase (CHO1) (Saccharomyces cerevisiae (strain ATCC 204508 / S288c) (Baker's yeast)).